Here is a 64-residue protein sequence, read N- to C-terminus: Translation machinery-associated protein 7 homolog (64 aa).

Residues 1–64 (MSGRQGGKAK…GGGIKKSGKK (64 aa)) form a disordered region. A coiled-coil region spans residues 21 to 50 (DLSEEDVEFKKKQQEEAKKIKEMAAKAGQR). Over residues 28-44 (EFKKKQQEEAKKIKEMA) the composition is skewed to basic and acidic residues. Positions 53-64 (LLGGGIKKSGKK) are enriched in gly residues.

This sequence belongs to the TMA7 family.

The polypeptide is Translation machinery-associated protein 7 homolog (Caenorhabditis briggsae).